The primary structure comprises 153 residues: Agglutinin (153 aa).

Beta-D-galactosyl-(1-&gt;3)-N-acetyl-D-galactosamine-binding positions include 22–25 and Asn-46; that span reads NAWE. One can recognise a Ricin B-type lectin domain in the interval 58–153; that stretch reads GDSAEYLIIN…DNQKWYFDAK (96 aa).

As to quaternary structure, homodimer.

Lectin that primarily recognizes glycans with a non-reducing terminal N-acetylgalactosamine (GalNAc), with a preference for the alpha- over the beta-anomer. Can also bind non-reducing terminal galactose (Gal) residues but with a lower affinity. Strongly interacts with glycolipid type glycans with terminal non-reducing Gal or GalNAc but fails to bind sialylated or fucosylated forms of the same glycans. Strongly interacts with galactosylated N-glycans, displaying highest affinity for alpha-1-3 branched mono-antennary N-glycans but also binding to multi-antennary glycans. This chain is Agglutinin, found in Sclerotinia sclerotiorum (strain ATCC 18683 / 1980 / Ss-1) (White mold).